The chain runs to 225 residues: Protein-L-isoaspartate O-methyltransferase (225 aa).

Residue Ser-75 is part of the active site.

Belongs to the methyltransferase superfamily. L-isoaspartyl/D-aspartyl protein methyltransferase family.

Its subcellular location is the cytoplasm. The enzyme catalyses [protein]-L-isoaspartate + S-adenosyl-L-methionine = [protein]-L-isoaspartate alpha-methyl ester + S-adenosyl-L-homocysteine. Functionally, catalyzes the methyl esterification of L-isoaspartyl residues in peptides and proteins that result from spontaneous decomposition of normal L-aspartyl and L-asparaginyl residues. It plays a role in the repair and/or degradation of damaged proteins. This is Protein-L-isoaspartate O-methyltransferase from Stenotrophomonas maltophilia (strain R551-3).